The chain runs to 522 residues: Anti-sigma-I factor RsgI4 (522 aa).

Topologically, residues 1–51 (MNLGVVIKIKRKKAIIVTETGEFKAVNARNGMFLGQKILFDQQDVIENNRN) are cytoplasmic. A RsgI N-terminal anti-sigma domain is found at 2–49 (NLGVVIKIKRKKAIIVTETGEFKAVNARNGMFLGQKILFDQQDVIENN). Residues 52-72 (GIGLAYSAAIAGMVAVFVFMF) traverse the membrane as a helical segment. Residues 73 to 522 (TYFGLHNFNG…SGILKWGREP (450 aa)) lie on the Extracellular side of the membrane. The span at 311 to 361 (SAKTPERATTVPVNTPVKPTDAPTKSPATATATATRAPVKATATPAKTLKP) shows a compositional bias: low complexity. The interval 311 to 371 (SAKTPERATT…SDTPVKTPDG (61 aa)) is disordered. One can recognise a CBM3 domain in the interval 371–522 (GEQSVKVRFY…SGILKWGREP (152 aa)).

Interacts (via RsgI N-terminal anti-sigma domain) with SigI4.

It localises to the cell membrane. Its function is as follows. Anti-sigma factor for SigI4. Negatively regulates SigI4 activity through direct interaction. Binding of the polysaccharide substrate to the extracellular C-terminal sensing domain of RsgI4 may induce a conformational change in its N-terminal cytoplasmic region, leading to the release and activation of SigI4. The sequence is that of Anti-sigma-I factor RsgI4 from Acetivibrio thermocellus (strain ATCC 27405 / DSM 1237 / JCM 9322 / NBRC 103400 / NCIMB 10682 / NRRL B-4536 / VPI 7372) (Clostridium thermocellum).